The primary structure comprises 343 residues: uncharacterized protein (343 aa).

3 disordered regions span residues 1-25 (MSSK…LSGT), 62-119 (KNIR…DCSD), and 169-188 (NPKI…TKKS). The segment covering 62–71 (KNIRQFKKSQ) has biased composition (basic residues). The span at 72 to 81 (NKTDTEKSGE) shows a compositional bias: basic and acidic residues. Acidic residues predominate over residues 83–107 (NDSDYSDYSDNSDDVDDLDDVDDLN).

This is an uncharacterized protein from Acanthamoeba polyphaga (Amoeba).